Here is a 227-residue protein sequence, read N- to C-terminus: MLLPPALYSRLAGEPGAAEPLPVERNPAAGEAPFRFAPRAVRFPRDHEFFEDGDVQRHLYLQDMLTQVSETPEKSMVPEFTCQVAGCCQVFAAIEDYQHHYHMMHGNTCSFCNRAFPSGHLLDVHILEWHDSLFQILAQRQDMYQCLVESCPEKFKTSQDRKDHMVRLHLYPADFRFDKPKTNRGPAMPAAADAATRAPTDDSDAMEICSEPAAPPPCRRTYSHRSV.

3 consecutive C2H2-type zinc fingers follow at residues 80-105 (FTCQVAGCCQVFAAIEDYQHHYHMMH), 107-130 (NTCSFCNRAFPSGHLLDVHILEWH), and 144-169 (YQCLVESCPEKFKTSQDRKDHMVRLH). The tract at residues 180–204 (PKTNRGPAMPAAADAATRAPTDDSD) is disordered. Over residues 186–198 (PAMPAAADAATRA) the composition is skewed to low complexity.

Belongs to the krueppel C2H2-type zinc-finger protein family.

Its subcellular location is the nucleus. In terms of biological role, may be involved in transcriptional regulation. This Mus musculus (Mouse) protein is Zinc finger protein 511 (Znf511).